A 267-amino-acid polypeptide reads, in one-letter code: tRNA pseudouridine synthase A (267 aa).

Aspartate 51 functions as the Nucleophile in the catalytic mechanism. Tyrosine 109 serves as a coordination point for substrate.

It belongs to the tRNA pseudouridine synthase TruA family. As to quaternary structure, homodimer.

It catalyses the reaction uridine(38/39/40) in tRNA = pseudouridine(38/39/40) in tRNA. In terms of biological role, formation of pseudouridine at positions 38, 39 and 40 in the anticodon stem and loop of transfer RNAs. In Staphylococcus saprophyticus subsp. saprophyticus (strain ATCC 15305 / DSM 20229 / NCIMB 8711 / NCTC 7292 / S-41), this protein is tRNA pseudouridine synthase A.